A 459-amino-acid polypeptide reads, in one-letter code: Endoglucanase CelA (459 aa).

The signal sequence occupies residues 1–27 (MKRLLALLATGVSIVGLTALAGPPAQA). Positions 28 to 134 (ATGCKAEYTI…TLNGATCSGS (107 aa)) constitute a CBM2 domain. The cysteines at positions 31 and 131 are disulfide-linked. The tract at residues 129-151 (ATCSGSVTDPPTDPPTDPPATGT) is disordered. A linker ('hinge') (Pro-Thr box) region spans residues 136–147 (TDPPTDPPTDPP). A catalytic region spans residues 148 to 357 (ATGTPAAVNG…YAFHFYAASH (210 aa)). The active-site Proton donor is the Glu-286. Residue Glu-378 is the Nucleophile of the active site.

This sequence belongs to the glycosyl hydrolase 5 (cellulase A) family. Post-translationally, the linker region (also termed 'hinge') may be a potential site for proteolysis.

The catalysed reaction is Endohydrolysis of (1-&gt;4)-beta-D-glucosidic linkages in cellulose, lichenin and cereal beta-D-glucans.. The polypeptide is Endoglucanase CelA (celA) (Streptomyces lividans).